A 163-amino-acid polypeptide reads, in one-letter code: 3-isopropylmalate dehydratase small subunit (163 aa).

It belongs to the LeuD family. LeuD type 2 subfamily. In terms of assembly, heterodimer of LeuC and LeuD.

The catalysed reaction is (2R,3S)-3-isopropylmalate = (2S)-2-isopropylmalate. It participates in amino-acid biosynthesis; L-leucine biosynthesis; L-leucine from 3-methyl-2-oxobutanoate: step 2/4. Functionally, catalyzes the isomerization between 2-isopropylmalate and 3-isopropylmalate, via the formation of 2-isopropylmaleate. The sequence is that of 3-isopropylmalate dehydratase small subunit from Endomicrobium trichonymphae.